A 281-amino-acid polypeptide reads, in one-letter code: MMLAKRILPCLDVKAGRVVKGVNFVNLRDAGDPVELAQAYNAAGADELVFLDITATHEERNILIDVVYRTADQVFIPLTVGGGIQSLTMIKDLLRAGADKVSLNSAAVRQPDLVNQASDRFGAQCIVVAIDARREPDCAPDQPRWQVYVRGGREATGLDAVAWAVEMAKRGAGELLVTSMDADGTQAGYDLELTRAIAERVEIPVIASGGAGTCEHIRAALVEGKAEAALLASLLHYGQLTIAQIKGYLHQHQVPVRQAEPLPQPAREGLGDSARRAMSSG.

Active-site residues include Asp-12 and Asp-131. The interval 256–281 (VRQAEPLPQPAREGLGDSARRAMSSG) is disordered.

This sequence belongs to the HisA/HisF family. In terms of assembly, heterodimer of HisH and HisF.

Its subcellular location is the cytoplasm. The enzyme catalyses 5-[(5-phospho-1-deoxy-D-ribulos-1-ylimino)methylamino]-1-(5-phospho-beta-D-ribosyl)imidazole-4-carboxamide + L-glutamine = D-erythro-1-(imidazol-4-yl)glycerol 3-phosphate + 5-amino-1-(5-phospho-beta-D-ribosyl)imidazole-4-carboxamide + L-glutamate + H(+). The protein operates within amino-acid biosynthesis; L-histidine biosynthesis; L-histidine from 5-phospho-alpha-D-ribose 1-diphosphate: step 5/9. Functionally, IGPS catalyzes the conversion of PRFAR and glutamine to IGP, AICAR and glutamate. The HisF subunit catalyzes the cyclization activity that produces IGP and AICAR from PRFAR using the ammonia provided by the HisH subunit. The sequence is that of Imidazole glycerol phosphate synthase subunit HisF from Thermosynechococcus vestitus (strain NIES-2133 / IAM M-273 / BP-1).